The following is a 326-amino-acid chain: Fos-related antigen 2 (326 aa).

Methionine 1 carries the post-translational modification N-acetylmethionine. The disordered stretch occupies residues 1–39 (MYQDYPGNFDTSSRGSSGSPAHAESYSSGGGGQQKFRVD). Residues 9–19 (FDTSSRGSSGS) are compositionally biased toward polar residues. A Glycyl lysine isopeptide (Lys-Gly) (interchain with G-Cter in SUMO2) cross-link involves residue lysine 35. An N6-acetyllysine; alternate modification is found at lysine 104. A Glycyl lysine isopeptide (Lys-Gly) (interchain with G-Cter in SUMO2); alternate cross-link involves residue lysine 104. Disordered regions lie at residues 111 to 131 (GRRR…RIRR), 193 to 244 (ISPE…QRSV), and 289 to 326 (EQES…LLAL). Position 120 is a phosphoserine (serine 120). One can recognise a bZIP domain in the interval 124-187 (EEKRRIRRER…EKLEFMLVAH (64 aa)). Positions 126-128 (KRR) are basic motif. The interval 129–136 (IRRERNKL) is leucine-zipper. The residue at position 200 (serine 200) is a Phosphoserine. Over residues 201-211 (PPTSGLQSLRG) the composition is skewed to polar residues. Lysine 222 participates in a covalent cross-link: Glycyl lysine isopeptide (Lys-Gly) (interchain with G-Cter in SUMO2); alternate. Lysine 222 participates in a covalent cross-link: Glycyl lysine isopeptide (Lys-Gly) (interchain with G-Cter in SUMO1); alternate. Serine 230 is subject to Phosphoserine. A Glycyl lysine isopeptide (Lys-Gly) (interchain with G-Cter in SUMO2) cross-link involves residue lysine 239. Serine 308 and serine 320 each carry phosphoserine. A compositionally biased stretch (low complexity) spans 308 to 320 (SSSGDQSSDSLNS).

Belongs to the bZIP family. Fos subfamily. Heterodimer. Interacts with the BAF multiprotein chromatin-remodeling complex subunits SMARCB1 and SMARCD1. Interacts with ARID1A and JUN. Expressed in the brain cortex. Expressed at night in pineal gland (at protein level). Also expressed in osteoblasts (at protein level).

Its subcellular location is the nucleus. Functionally, controls osteoclast survival and size. As a dimer with JUN, activates LIF transcription. Activates CEBPB transcription in PGE2-activated osteoblasts. This chain is Fos-related antigen 2 (Fosl2), found in Rattus norvegicus (Rat).